Here is a 125-residue protein sequence, read N- to C-terminus: Small ribosomal subunit protein uS12m (125 aa).

Disordered regions lie at residues 1–23 and 104–125; these read MPTLNQLIRHGREEKRRTDRTRA and LMGIPGRRSGRSKYGAEKPKSI. The span at 10 to 23 shows a compositional bias: basic and acidic residues; that stretch reads HGREEKRRTDRTRA.

The protein belongs to the universal ribosomal protein uS12 family.

The protein resides in the mitochondrion. In terms of biological role, protein S12 is involved in the translation initiation step. The protein is Small ribosomal subunit protein uS12m (RPS12) of Raphanus sativus (Radish).